Reading from the N-terminus, the 2752-residue chain is Piezo-type mechanosensitive ion channel component 2 (2752 aa).

Topologically, residues 1 to 12 (MASEVVCGLIFR) are cytoplasmic. Residues 13–24 (LLLPICLAVACA) form a helical membrane-spanning segment. Over 25–30 (FRYNGL) the chain is Extracellular. A helical membrane pass occupies residues 31 to 43 (SFVYLIYLLLIPL). The Cytoplasmic portion of the chain corresponds to 44 to 50 (FSEPTKT). Residues 51–76 (TMQGHTGRLLKSLCFISLSFLLLHII) form a helical membrane-spanning segment. Topologically, residues 77–122 (FHITLVSLEAQHRIAPGYNCSTWEKTFRQIGFESLKGADAGNGIRV) are extracellular. N95 carries N-linked (GlcNAc...) asparagine glycosylation. Residues 123–141 (FVPDIGMFIASLTIWLLCR) form a helical membrane-spanning segment. The Cytoplasmic portion of the chain corresponds to 142 to 221 (NIVQKPVTDE…KEFIGNMITT (80 aa)). The helical transmembrane segment at 222–237 (AGKVVVTILLGSSGMM) threads the bilayer. The Extracellular segment spans residues 238-240 (LPS). The helical transmembrane segment at 241–258 (LTSSVYFFVFLGLCTWWS) threads the bilayer. Over 259-264 (WCRTFD) the chain is Cytoplasmic. A helical membrane pass occupies residues 265 to 287 (PLLFSCLCVLLAIFTAGHLIGLY). Over 288–335 (LYQFQFFQEAVPPNDYYARLFGIKSVIQTDCSSTWKIIVNPDLSWYHH) the chain is Extracellular. Residues 336–355 (ANPILLLVMYYTLATLIRIW) traverse the membrane as a helical segment. Residues 356–492 (LQEPLVQDEG…SIKVHAMVSV (137 aa)) are Cytoplasmic-facing. Residues 446 to 478 (STPQYRWEPSDESSEKREEEEEEKEEFEEERSR) are disordered. Residues 463-474 (EEEEEEKEEFEE) show a composition bias toward acidic residues. A helical transmembrane segment spans residues 493-514 (FQFIMKQSYICALIAMMAWSIT). Topologically, residues 515–519 (YHSWL) are extracellular. Residues 520–531 (TFVLLIWSCTLW) traverse the membrane as a helical segment. The Cytoplasmic segment spans residues 532–535 (MIRN). The helical transmembrane segment at 536–562 (RRKYAMISSPFMVVYGNLLLILQYIWS) threads the bilayer. At 563-583 (FELPEIKKVPGFLEKKEPGEL) the chain is on the extracellular side. A helical membrane pass occupies residues 584 to 614 (ASKILFTITFWLLLRQHLTEQKALQEKEALL). Residues 615–685 (SEVKIGSQEN…GNLVVAMFIK (71 aa)) are Cytoplasmic-facing. A compositionally biased stretch (acidic residues) spans 623–632 (ENEEKDEELQ). A disordered region spans residues 623–664 (ENEEKDEELQDIQVEGEPKEEEEEEAKEEKQERKKVEQEEAE). Residues 649–660 (KEEKQERKKVEQ) show a composition bias toward basic and acidic residues. The chain crosses the membrane as a helical span at residues 686 to 699 (YWIYVCGGMFFFVS). The Extracellular portion of the chain corresponds to 700 to 705 (FEGKIV). Residues 706 to 724 (MYKIIYMVLFLFCVALYQV) form a helical membrane-spanning segment. Topologically, residues 725–733 (HYEWWRKIL) are cytoplasmic. The helical transmembrane segment at 734 to 753 (KYFWMSVVIYTMLVLIFIYT) threads the bilayer. The Extracellular segment spans residues 754–785 (YQFENFPGLWQNMTGLKKEKLEDLGLKQFTVA). Residues 786–807 (ELFTRIFIPTSFLLVCILHLHY) traverse the membrane as a helical segment. Residues 808 to 940 (FHDRFLELTD…QVFMWWILEL (133 aa)) lie on the Cytoplasmic side of the membrane. Phosphoserine is present on S838. Over residues 862–883 (PGEEKLEGYSEKAQKGDLGKDS) the composition is skewed to basic and acidic residues. The tract at residues 862–902 (PGEEKLEGYSEKAQKGDLGKDSEESEEDGEEEEESEEEEET) is disordered. The segment covering 884 to 902 (EESEEDGEEEEESEEEEET) has biased composition (acidic residues). A helical membrane pass occupies residues 941–956 (HIIKIVSSYIIWVSVK). The Extracellular segment spans residues 957 to 962 (EVSLFN). Residues 963 to 972 (YVFLISWAFA) traverse the membrane as a helical segment. Residues 973 to 980 (LPYAKLRR) are Cytoplasmic-facing. A helical transmembrane segment spans residues 981-1001 (LASSVCTVWTCVIIVCKMLYQ). At 1002-1057 (LQTIKPENFSVNCSLPNENQTNIPFNELNKSLLYSAPIDPTEWVGLRKSSPLLVYL) the chain is on the extracellular side. N-linked (GlcNAc...) asparagine glycosylation is present at N1013. Residues C1014 and C1192 are joined by a disulfide bond. The chain crosses the membrane as a helical span at residues 1058 to 1082 (RNNLLMLAILAFEVTIYRHQEYYRG). Residues 1083–1123 (RNNLTAPVSRTIFHDITRLHLDDGLINCAKYFINYFFYKFG) are Cytoplasmic-facing. Residues 1124–1138 (LETCFLMSVNVIGQR) traverse the membrane as a helical segment. Residues 1139 to 1140 (MD) lie on the Extracellular side of the membrane. The chain crosses the membrane as a helical span at residues 1141–1154 (FYAMIHACWLIAVL). Over 1155–1165 (YRRRRKAIAEI) the chain is Cytoplasmic. A helical membrane pass occupies residues 1166 to 1185 (WPKYCCFLACIITFQYFICI). The Extracellular segment spans residues 1186-1222 (GIPPAPCRDYPWRFKGASFNDNIIKWLYFPDFIVRPN). Residues 1223–1243 (PVFLVYDFMLLLCASLQRQIF) traverse the membrane as a helical segment. The Cytoplasmic portion of the chain corresponds to 1244-1297 (EDENKAAVRIMAGDNVEICMNLDAASFSQHNPVPDFIHCRSYLDMSKVIIFSYL). Residues 1298-1310 (FWFVLTIIFITGT) form a helical membrane-spanning segment. At 1311–1316 (TRISIF) the chain is on the extracellular side. Residues 1317–1329 (CMGYLVACFYFLL) form a helical membrane-spanning segment. Over 1330–1338 (FGGDLLLKP) the chain is Cytoplasmic. Residues 1339–1364 (IKSILRYWDWLIAYNVFVITMKNILS) form a helical membrane-spanning segment. Residues 1365–1413 (IGACGYIGTLVHNSCWLIQAFSLACTVKGYQMPAANSPCTLPSGEAGII) lie on the Extracellular side of the membrane. A helical membrane pass occupies residues 1414–1430 (WDSICFAFLLLQRRVFM). Residues 1431–1921 (SYYFLHVVAD…YAMYNTLVAR (491 aa)) lie on the Cytoplasmic side of the membrane. Residues 1458 to 1529 (TIVKAVKARI…EREADKQKAK (72 aa)) are a coiled coil. Disordered stretches follow at residues 1488–1534 (QQKY…KKKQ), 1593–1636 (ALRQ…KKSD), and 1844–1868 (SQDDSAGKNRMAVSPDDSRTDKLGS). Over residues 1594–1615 (LRQRHKEKKRSAREERKRRRKG) the composition is skewed to basic residues. The helical transmembrane segment at 1922 to 1936 (SEMVCYFVIILNHMV) threads the bilayer. Residues 1937-1943 (SASMITL) are Extracellular-facing. A helical membrane pass occupies residues 1944 to 1955 (LLPILIFLWAML). The Cytoplasmic portion of the chain corresponds to 1956-1961 (SVPRPS). A helical transmembrane segment spans residues 1962-1983 (RRFWMMAIVYTEVAIVVKYFFQ). Topologically, residues 1984–2016 (FGFFPWNKNVEVNKDKPYHPPNIIGVEKKEGYV) are extracellular. The chain crosses the membrane as a helical span at residues 2017 to 2035 (LYDLIQLLALFFHRSILKC). At 2036–2189 (HGLWDEDDMT…HPEYSAVTDV (154 aa)) the chain is on the cytoplasmic side. Disordered regions lie at residues 2047–2069 (SGMAREESDDELSLGHGRRDSSD) and 2090–2135 (QQTA…SVLS). Residues 2100 to 2127 (GSSSEPSQRSSFSSNRSQRGSTSTRNSS) show a composition bias toward low complexity. A helical membrane pass occupies residues 2190–2209 (YVLMFLADTVDFIIIVFGFW). The Extracellular portion of the chain corresponds to 2210 to 2231 (AFGKHSAAADITSSLSEDQVPG). A helical membrane pass occupies residues 2232 to 2252 (PFLVMVLIQFGTMVVDRALYL). At 2253–2256 (RKTV) the chain is on the cytoplasmic side. The helical transmembrane segment at 2257–2280 (LGKVIFQVILVFGIHFWMFFILPG) threads the bilayer. Residues 2281–2289 (VTERKFSQN) are Extracellular-facing. A helical transmembrane segment spans residues 2290 to 2312 (LVAQLWYFVKCVYFGLSAYQIRC). At 2313–2397 (GYPTRVLGNF…YPQPRGQKKK (85 aa)) the chain is on the cytoplasmic side. The chain crosses the membrane as a helical span at residues 2398 to 2421 (KVVKYGMGGMIIVLLICIVWFPLL). The Extracellular portion of the chain corresponds to 2422-2669 (FMSLIKSVAG…PSLGFLAGYG (248 aa)). A helical membrane pass occupies residues 2670–2690 (IMGLYASVVLVIGKFVREFFS). Topologically, residues 2691 to 2752 (GISHSIMFEE…MIKWTREKTN (62 aa)) are cytoplasmic.

Belongs to the PIEZO (TC 1.A.75) family. As to quaternary structure, homotrimer; the homotrimer forms a propeller-shaped Piezo channel with a cation-ion conducting pore. Heterotrimeric interaction may occur between PIEZO1 and PIEZO2. Interacts with STOML3. Interacts with TMC7; the interaction inhibits PIEZO2-conducted mechanically activated currents. Interacts with TMC1; the interaction may be part of the MET complex. Interacts with MDFIC (via C-terminus); the interaction prolongs Piezo channel inactivation. Interacts with MDFI (via C-terminus); the interaction prolongs Piezo channel inactivation.

Its subcellular location is the cell membrane. The enzyme catalyses Ca(2+)(in) = Ca(2+)(out). Regulated by auxillary subunits MDFIC and MDFI. Channel activity is inhibited by TMEM120A. Phosphatidic acid and lysophosphatidic acid inhibit PIEZO2 channel activity. In terms of biological role, pore-forming subunit of the mechanosensitive non-specific cation Piezo channel required for rapidly adapting mechanically activated (MA) currents and has a key role in sensing touch and tactile pain. Piezo channels are homotrimeric three-blade propeller-shaped structures that utilize a cap-motion and plug-and-latch mechanism to gate their ion-conducting pathways. Expressed in sensory neurons, is essential for diverse physiological processes, including respiratory control, systemic metabolism, urinary function, and proprioception. Mediates airway stretch sensing, enabling efficient respiration at birth and maintaining normal breathing in adults. It regulates brown and beige adipose tissue morphology and function, preventing systemic hypermetabolism. In the lower urinary tract, acts as a sensor in both the bladder urothelium and innervating sensory neurons being required for bladder-stretch sensing and urethral micturition reflexes, ensuring proper urinary function. Additionally, PIEZO2 serves as the principal mechanotransducer in proprioceptors, facilitating proprioception and coordinated body movements. In inner ear hair cells, PIEZO1/2 subunits may constitute part of the mechanotransducer (MET) non-selective cation channel complex where they may act as pore-forming ion-conducting component in the complex. Required for Merkel-cell mechanotransduction. Plays a major role in light-touch mechanosensation. In Homo sapiens (Human), this protein is Piezo-type mechanosensitive ion channel component 2.